Consider the following 368-residue polypeptide: (Iso)eugenol O-methyltransferase (368 aa).

The propeptide occupies 1–2 (MG). S-adenosyl-L-methionine is bound by residues S187, 211-212 (GG), D234, 254-255 (DM), and K268. H272 (proton acceptor) is an active-site residue.

The protein belongs to the class I-like SAM-binding methyltransferase superfamily. Cation-independent O-methyltransferase family. COMT subfamily. Homodimer. In terms of tissue distribution, expressed in petals, style and stamens, but not in stigma, sepals, leaves or stem tissues.

The catalysed reaction is (E)-isoeugenol + S-adenosyl-L-methionine = (E)-isomethyleugenol + S-adenosyl-L-homocysteine + H(+). In terms of biological role, catalyzes the methylation of the para-4-hydroxyl of both eugenol and (iso)eugenol to methyleugenol and isomethyleugenol, respectively. The resulting products are part of a complex mixture of low-molecular-weight volatile compounds emitted by the flowers to attract pollinators. This Clarkia breweri (Fairy fans) protein is (Iso)eugenol O-methyltransferase (IEMT1).